Here is a 101-residue protein sequence, read N- to C-terminus: NAD(P)H-quinone oxidoreductase subunit 4L, chloroplastic (101 aa).

The next 3 helical transmembrane spans lie at M2 to I22, M32 to F52, and I61 to V81.

The protein belongs to the complex I subunit 4L family. NDH is composed of at least 16 different subunits, 5 of which are encoded in the nucleus.

The protein localises to the plastid. It localises to the chloroplast thylakoid membrane. The enzyme catalyses a plastoquinone + NADH + (n+1) H(+)(in) = a plastoquinol + NAD(+) + n H(+)(out). It catalyses the reaction a plastoquinone + NADPH + (n+1) H(+)(in) = a plastoquinol + NADP(+) + n H(+)(out). Functionally, NDH shuttles electrons from NAD(P)H:plastoquinone, via FMN and iron-sulfur (Fe-S) centers, to quinones in the photosynthetic chain and possibly in a chloroplast respiratory chain. The immediate electron acceptor for the enzyme in this species is believed to be plastoquinone. Couples the redox reaction to proton translocation, and thus conserves the redox energy in a proton gradient. This Manihot esculenta (Cassava) protein is NAD(P)H-quinone oxidoreductase subunit 4L, chloroplastic.